We begin with the raw amino-acid sequence, 230 residues long: Ribonuclease 3 (230 aa).

In terms of domain architecture, RNase III spans 10 to 133 (DPRLLSRIGY…IIGAIYLDSS (124 aa)). E46 serves as a coordination point for Mg(2+). Residue D50 is part of the active site. Mg(2+) is bound by residues D119 and E122. E122 is a catalytic residue. Residues 161 to 230 (DPKSRLQEYL…AAEILKLLEQ (70 aa)) enclose the DRBM domain.

The protein belongs to the ribonuclease III family. As to quaternary structure, homodimer. Mg(2+) is required as a cofactor.

The protein resides in the cytoplasm. The catalysed reaction is Endonucleolytic cleavage to 5'-phosphomonoester.. Its function is as follows. Digests double-stranded RNA. Involved in the processing of primary rRNA transcript to yield the immediate precursors to the large and small rRNAs (23S and 16S). Processes some mRNAs, and tRNAs when they are encoded in the rRNA operon. Processes pre-crRNA and tracrRNA of type II CRISPR loci if present in the organism. The chain is Ribonuclease 3 (rnc) from Acinetobacter baumannii (strain AB307-0294).